The following is a 217-amino-acid chain: Regulator of G-protein signaling 19 (217 aa).

The segment at 1–29 (MPTPHEAEKQITGPEEADRPPSMSSHDTA) is disordered. Phosphoserine is present on residues Ser24 and Ser97. Positions 90 to 206 (SFDKLMHSPA…LSSPTYRALL (117 aa)) constitute an RGS domain. Position 151 is a phosphoserine; by MAPK1 and MAPK3 (Ser151). The segment at 207 to 217 (LQGPSQSSSEA) is interaction with GIPC.

In terms of assembly, interacts with GIPC PDZ domain. Interacts with GNAO1. Post-translationally, fatty acylated. Heavily palmitoylated in the cysteine string motif. In terms of processing, phosphorylated, mainly on serine residues. As to expression, highest expression in lung. Placenta, liver and heart also express high levels of GAIP.

It is found in the membrane. Its function is as follows. Inhibits signal transduction by increasing the GTPase activity of G protein alpha subunits thereby driving them into their inactive GDP-bound form. Binds to G-alpha subfamily 1 members, with the order G(i)a3 &gt; G(i)a1 &gt; G(o)a &gt;&gt; G(z)a/G(i)a2. Activity on G(z)-alpha is inhibited by phosphorylation and palmitoylation of the G-protein. This is Regulator of G-protein signaling 19 (RGS19) from Homo sapiens (Human).